The following is a 377-amino-acid chain: Chaperone protein DnaJ (377 aa).

The J domain occupies 5 to 70 (DYYEVLGVSR…DKKAAYDQFG (66 aa)). The CR-type zinc finger occupies 133-211 (GLTKELRIPT…CHGDGRVEKS (79 aa)). 8 residues coordinate Zn(2+): C146, C149, C163, C166, C185, C188, C199, and C202. 4 CXXCXGXG motif repeats span residues 146 to 153 (CDLCEGSG), 163 to 170 (CGTCHGQG), 185 to 192 (CPTCHGRG), and 199 to 206 (CTKCHGDG).

Belongs to the DnaJ family. Homodimer. Zn(2+) serves as cofactor.

It localises to the cytoplasm. Functionally, participates actively in the response to hyperosmotic and heat shock by preventing the aggregation of stress-denatured proteins and by disaggregating proteins, also in an autonomous, DnaK-independent fashion. Unfolded proteins bind initially to DnaJ; upon interaction with the DnaJ-bound protein, DnaK hydrolyzes its bound ATP, resulting in the formation of a stable complex. GrpE releases ADP from DnaK; ATP binding to DnaK triggers the release of the substrate protein, thus completing the reaction cycle. Several rounds of ATP-dependent interactions between DnaJ, DnaK and GrpE are required for fully efficient folding. Also involved, together with DnaK and GrpE, in the DNA replication of plasmids through activation of initiation proteins. The polypeptide is Chaperone protein DnaJ (Shewanella baltica (strain OS223)).